We begin with the raw amino-acid sequence, 486 residues long: Zinc finger chaperone ZPR1 (486 aa).

Residues M1–N31 are disordered. The residue at position 23 (S23) is a Phosphoserine. C4-type zinc fingers lie at residues C54–C86 and C295–C327. At T407 the chain carries Phosphothreonine.

It belongs to the ZPR1 family. Interacts with elongation factor 1-alpha.

The protein resides in the cytoplasm. The protein localises to the nucleus. Functionally, acts as a protein folding chaperone for elongation factor 1-alpha. The polypeptide is Zinc finger chaperone ZPR1 (Saccharomyces cerevisiae (strain ATCC 204508 / S288c) (Baker's yeast)).